A 274-amino-acid chain; its full sequence is 3-methyl-2-oxobutanoate hydroxymethyltransferase (274 aa).

Residues Asp44 and Asp83 each coordinate Mg(2+). Residues 44–45 (DS), Asp83, and Lys113 each bind 3-methyl-2-oxobutanoate. Residue Glu115 coordinates Mg(2+). Residue Glu182 is the Proton acceptor of the active site.

This sequence belongs to the PanB family. In terms of assembly, homodecamer; pentamer of dimers. Mg(2+) is required as a cofactor.

It localises to the cytoplasm. The enzyme catalyses 3-methyl-2-oxobutanoate + (6R)-5,10-methylene-5,6,7,8-tetrahydrofolate + H2O = 2-dehydropantoate + (6S)-5,6,7,8-tetrahydrofolate. The protein operates within cofactor biosynthesis; (R)-pantothenate biosynthesis; (R)-pantoate from 3-methyl-2-oxobutanoate: step 1/2. Functionally, catalyzes the reversible reaction in which hydroxymethyl group from 5,10-methylenetetrahydrofolate is transferred onto alpha-ketoisovalerate to form ketopantoate. The polypeptide is 3-methyl-2-oxobutanoate hydroxymethyltransferase (Campylobacter jejuni subsp. jejuni serotype O:23/36 (strain 81-176)).